Consider the following 209-residue polypeptide: Nucleoside triphosphate pyrophosphatase (209 aa).

The active-site Proton acceptor is Asp79.

This sequence belongs to the Maf family. The cofactor is a divalent metal cation.

The protein resides in the cytoplasm. It carries out the reaction a ribonucleoside 5'-triphosphate + H2O = a ribonucleoside 5'-phosphate + diphosphate + H(+). The catalysed reaction is a 2'-deoxyribonucleoside 5'-triphosphate + H2O = a 2'-deoxyribonucleoside 5'-phosphate + diphosphate + H(+). In terms of biological role, nucleoside triphosphate pyrophosphatase. May have a dual role in cell division arrest and in preventing the incorporation of modified nucleotides into cellular nucleic acids. In Mycolicibacterium vanbaalenii (strain DSM 7251 / JCM 13017 / BCRC 16820 / KCTC 9966 / NRRL B-24157 / PYR-1) (Mycobacterium vanbaalenii), this protein is Nucleoside triphosphate pyrophosphatase.